The following is a 143-amino-acid chain: Heat shock protein Hsp-16.41 (143 aa).

Residues 35 to 140 enclose the sHSP domain; sequence HNSFNFSDNI…SSRSIPINFV (106 aa).

The protein belongs to the small heat shock protein (HSP20) family.

In Caenorhabditis elegans, this protein is Heat shock protein Hsp-16.41 (hsp-16.41).